The primary structure comprises 106 residues: Putative protein SH (106 aa).

The interval His-48–Ser-106 is disordered. Over residues Phe-58–Ser-80 the composition is skewed to basic and acidic residues. Positions Thr-81–Thr-92 are enriched in low complexity.

In terms of tissue distribution, heart.

Functionally, may be involved with the regulation of GNRH gene expression. It is not known if this protein is transcribed. This chain is Putative protein SH, found in Rattus norvegicus (Rat).